A 460-amino-acid chain; its full sequence is Proton extrusion protein PxcA (460 aa).

Disordered regions lie at residues 82-128 and 143-190; these read FSRL…QRRD and SRYK…GSGN. Residues 90 to 102 are compositionally biased toward polar residues; that stretch reads QNGSGPTSAQDKA. The span at 107–120 shows a compositional bias: low complexity; that stretch reads AAEANVSESSSENS. Polar residues predominate over residues 151-163; that stretch reads KSQPISASISTSP. Low complexity predominate over residues 171-184; sequence QPTSTQPSSSNVSV. The next 4 helical transmembrane spans lie at 242 to 262, 337 to 357, 373 to 393, and 420 to 440; these read FLLL…NFLF, GLKN…LIFV, IYGL…DVFV, and FIYG…KYWI.

Belongs to the CemA family.

Its subcellular location is the cell inner membrane. In terms of biological role, required for H(+) efflux immediately after light irradiation to form a rapid H(+) concentration gradient across the thylakoid membranes. Together with PxcL, contributes to transient H(+) uptake following dark to light transition. The chain is Proton extrusion protein PxcA from Synechococcus sp. (strain JA-2-3B'a(2-13)) (Cyanobacteria bacterium Yellowstone B-Prime).